The sequence spans 373 residues: UDP-sugar transporter UST74c (373 aa).

Residues Leu-27 to Leu-49 form a disordered region. Ser-50 is subject to Phosphoserine. The next 8 membrane-spanning stretches (helical) occupy residues His-89 to Gly-111, Phe-131 to Leu-153, Ile-174 to Leu-196, Met-206 to Tyr-225, Tyr-238 to Gly-260, Val-275 to Cys-297, Ser-302 to Ile-324, and Val-329 to Val-351.

Belongs to the TPT transporter family. SLC35D subfamily.

It localises to the golgi apparatus membrane. Functionally, involved in the import of UDP-sugars from the cytoplasm into the Golgi lumen. The polypeptide is UDP-sugar transporter UST74c (frc) (Drosophila melanogaster (Fruit fly)).